Reading from the N-terminus, the 333-residue chain is Adenosine deaminase (333 aa).

Zn(2+) is bound by residues His-12 and His-14. Positions 14, 16, and 170 each coordinate substrate. Residue His-197 participates in Zn(2+) binding. The active-site Proton donor is the Glu-200. Asp-278 serves as a coordination point for Zn(2+). Asp-279 provides a ligand contact to substrate.

This sequence belongs to the metallo-dependent hydrolases superfamily. Adenosine and AMP deaminases family. Adenosine deaminase subfamily. The cofactor is Zn(2+).

It catalyses the reaction adenosine + H2O + H(+) = inosine + NH4(+). It carries out the reaction 2'-deoxyadenosine + H2O + H(+) = 2'-deoxyinosine + NH4(+). In terms of biological role, catalyzes the hydrolytic deamination of adenosine and 2-deoxyadenosine. This is Adenosine deaminase from Escherichia coli O157:H7.